The chain runs to 677 residues: UvrABC system protein B (677 aa).

Positions 24–412 (EGVLEGVPAQ…EGIVVEQVIR (389 aa)) constitute a Helicase ATP-binding domain. Residue 37-44 (GVTGSGKT) coordinates ATP. The Beta-hairpin motif lies at 90-113 (YYDYYQPEAYLPSSDTYIEKDLAI). The Helicase C-terminal domain maps to 429-591 (QIDDLMEEIQ…ITPQQIKKAR (163 aa)). The UVR domain occupies 635–670 (EKSMERTRKLMQEAAKKLEFIEAAQYRDELLKMEDL).

The protein belongs to the UvrB family. In terms of assembly, forms a heterotetramer with UvrA during the search for lesions. Interacts with UvrC in an incision complex.

The protein localises to the cytoplasm. Functionally, the UvrABC repair system catalyzes the recognition and processing of DNA lesions. A damage recognition complex composed of 2 UvrA and 2 UvrB subunits scans DNA for abnormalities. Upon binding of the UvrA(2)B(2) complex to a putative damaged site, the DNA wraps around one UvrB monomer. DNA wrap is dependent on ATP binding by UvrB and probably causes local melting of the DNA helix, facilitating insertion of UvrB beta-hairpin between the DNA strands. Then UvrB probes one DNA strand for the presence of a lesion. If a lesion is found the UvrA subunits dissociate and the UvrB-DNA preincision complex is formed. This complex is subsequently bound by UvrC and the second UvrB is released. If no lesion is found, the DNA wraps around the other UvrB subunit that will check the other stand for damage. In Bacteroides fragilis (strain YCH46), this protein is UvrABC system protein B.